Consider the following 254-residue polypeptide: DNA repair protein RecO (254 aa).

It belongs to the RecO family.

Functionally, involved in DNA repair and RecF pathway recombination. The protein is DNA repair protein RecO of Agrobacterium fabrum (strain C58 / ATCC 33970) (Agrobacterium tumefaciens (strain C58)).